Reading from the N-terminus, the 276-residue chain is Exosome complex component RRP43 (276 aa).

At A2 the chain carries N-acetylalanine.

Belongs to the RNase PH family. As to quaternary structure, component of the RNA exosome core complex (Exo-9), composed of EXOSC1, EXOSC2, EXOSC3, EXOSC4, EXOSC5, EXOSC6, EXOSC7, EXOSC8 and EXOSC9; within the complex interacts with EXOSC5 and EXOSC6. The catalytically inactive RNA exosome core complex (Exo-9) associates with the catalytic subunit EXOSC10/RRP6. Exo-9 may associate with DIS3 to form the nucleolar exosome complex, or DIS3L to form the cytoplasmic exosome complex. Exo-9 is formed by a hexameric base ring consisting of the heterodimers EXOSC4-EXOSC9, EXOSC5-EXOSC8 and EXOSC6-EXOSC7, and a cap ring consisting of EXOSC1, EXOSC2 and EXOSC3. The RNA exosome complex associates with cofactors C1D/RRP47, MPHOSPH6/MPP6 and MTREX/MTR4. Binds outer membrane protein opap from Neisseria gonorrhoeae.

The protein resides in the cytoplasm. It localises to the nucleus. The protein localises to the nucleolus. Functionally, non-catalytic component of the RNA exosome complex which has 3'-&gt;5' exoribonuclease activity and participates in a multitude of cellular RNA processing and degradation events. In the nucleus, the RNA exosome complex is involved in proper maturation of stable RNA species such as rRNA, snRNA and snoRNA, in the elimination of RNA processing by-products and non-coding 'pervasive' transcripts, such as antisense RNA species and promoter-upstream transcripts (PROMPTs), and of mRNAs with processing defects, thereby limiting or excluding their export to the cytoplasm. The RNA exosome may be involved in Ig class switch recombination (CSR) and/or Ig variable region somatic hypermutation (SHM) by targeting AICDA deamination activity to transcribed dsDNA substrates. In the cytoplasm, the RNA exosome complex is involved in general mRNA turnover and specifically degrades inherently unstable mRNAs containing AU-rich elements (AREs) within their 3' untranslated regions, and in RNA surveillance pathways, preventing translation of aberrant mRNAs. It seems to be involved in degradation of histone mRNA. The catalytic inactive RNA exosome core complex of 9 subunits (Exo-9) is proposed to play a pivotal role in the binding and presentation of RNA for ribonucleolysis, and to serve as a scaffold for the association with catalytic subunits and accessory proteins or complexes. EXOSC8 binds to ARE-containing RNAs. The chain is Exosome complex component RRP43 (EXOSC8) from Homo sapiens (Human).